Consider the following 581-residue polypeptide: 2-isopropylmalate synthase (581 aa).

Residues 32–306 form the Pyruvate carboxyltransferase domain; it reads PQWCAVDLRD…DPQLDFSDIK (275 aa). Mg(2+) is bound by residues Asp-41, His-245, His-247, and Asn-281. Residues 455-581 form a regulatory domain region; sequence RSAPVEQIAL…KHQQLQNGGV (127 aa).

Belongs to the alpha-IPM synthase/homocitrate synthase family. LeuA type 2 subfamily. In terms of assembly, homodimer. Mg(2+) serves as cofactor.

The protein resides in the cytoplasm. The enzyme catalyses 3-methyl-2-oxobutanoate + acetyl-CoA + H2O = (2S)-2-isopropylmalate + CoA + H(+). The protein operates within amino-acid biosynthesis; L-leucine biosynthesis; L-leucine from 3-methyl-2-oxobutanoate: step 1/4. Catalyzes the condensation of the acetyl group of acetyl-CoA with 3-methyl-2-oxobutanoate (2-ketoisovalerate) to form 3-carboxy-3-hydroxy-4-methylpentanoate (2-isopropylmalate). This is 2-isopropylmalate synthase from Corynebacterium efficiens (strain DSM 44549 / YS-314 / AJ 12310 / JCM 11189 / NBRC 100395).